The primary structure comprises 506 residues: Maturase K (506 aa).

Belongs to the intron maturase 2 family. MatK subfamily.

It is found in the plastid. Its subcellular location is the chloroplast. Functionally, usually encoded in the trnK tRNA gene intron. Probably assists in splicing its own and other chloroplast group II introns. The protein is Maturase K of Olea europaea (Common olive).